A 126-amino-acid polypeptide reads, in one-letter code: Phosphoribosyl-AMP cyclohydrolase (126 aa).

Aspartate 77 contributes to the Mg(2+) binding site. Residue cysteine 78 participates in Zn(2+) binding. 2 residues coordinate Mg(2+): aspartate 79 and aspartate 81. Zn(2+)-binding residues include cysteine 95 and cysteine 102.

Belongs to the PRA-CH family. In terms of assembly, homodimer. Mg(2+) is required as a cofactor. Requires Zn(2+) as cofactor.

The protein localises to the cytoplasm. The catalysed reaction is 1-(5-phospho-beta-D-ribosyl)-5'-AMP + H2O = 1-(5-phospho-beta-D-ribosyl)-5-[(5-phospho-beta-D-ribosylamino)methylideneamino]imidazole-4-carboxamide. The protein operates within amino-acid biosynthesis; L-histidine biosynthesis; L-histidine from 5-phospho-alpha-D-ribose 1-diphosphate: step 3/9. Catalyzes the hydrolysis of the adenine ring of phosphoribosyl-AMP. The chain is Phosphoribosyl-AMP cyclohydrolase from Cellvibrio japonicus (strain Ueda107) (Pseudomonas fluorescens subsp. cellulosa).